The chain runs to 146 residues: uncharacterized protein (146 aa).

The chain crosses the membrane as a helical span at residues 7–24 (VIALFLVTGLTLYAIRLL).

It is found in the membrane. This is an uncharacterized protein from Haemophilus influenzae (strain ATCC 51907 / DSM 11121 / KW20 / Rd).